Here is a 484-residue protein sequence, read N- to C-terminus: Cobyric acid synthase (484 aa).

The GATase cobBQ-type domain occupies 249 to 438; that stretch reads QLRVAVPVFT…LHGIFDRPET (190 aa). The active-site Nucleophile is cysteine 330. Residue histidine 430 is part of the active site.

This sequence belongs to the CobB/CobQ family. CobQ subfamily.

It functions in the pathway cofactor biosynthesis; adenosylcobalamin biosynthesis. In terms of biological role, catalyzes amidations at positions B, D, E, and G on adenosylcobyrinic A,C-diamide. NH(2) groups are provided by glutamine, and one molecule of ATP is hydrogenolyzed for each amidation. In Vibrio cholerae serotype O1 (strain ATCC 39315 / El Tor Inaba N16961), this protein is Cobyric acid synthase.